The sequence spans 244 residues: Ethylene-responsive transcription factor 1 (244 aa).

A DNA-binding region (AP2/ERF) is located at residues 106 to 164; that stretch reads HYRGVRQRPWGKFAAEIRDPAKNGARVWLGTYESAEEAALAYGKAAFRMRGTKALLNFP. Over residues 186–198 the composition is skewed to low complexity; sequence SASSSVSSASESG. Residues 186 to 214 are disordered; sequence SASSSVSSASESGSPKRRRKGVAAKQAEL.

Belongs to the ethylene-response factor family. Class 1 subfamily. As to expression, present in stems.

The protein resides in the nucleus. In terms of biological role, involved in the regulation of gene expression during fruit ripening, by stress factors and by components of stress signal transduction pathways. Transcription factor that binds to the GCC-box pathogenesis-related promoter element. Probably acts as a transcriptional activator and may be involved in disease resistance pathways. The protein is Ethylene-responsive transcription factor 1 (ERF1) of Solanum lycopersicum (Tomato).